The following is a 186-amino-acid chain: Peptidyl-tRNA hydrolase (186 aa).

Residue tyrosine 14 coordinates tRNA. Histidine 19 functions as the Proton acceptor in the catalytic mechanism. Residues tyrosine 64, asparagine 66, and asparagine 112 each contribute to the tRNA site.

Belongs to the PTH family. In terms of assembly, monomer.

It is found in the cytoplasm. It catalyses the reaction an N-acyl-L-alpha-aminoacyl-tRNA + H2O = an N-acyl-L-amino acid + a tRNA + H(+). Functionally, hydrolyzes ribosome-free peptidyl-tRNAs (with 1 or more amino acids incorporated), which drop off the ribosome during protein synthesis, or as a result of ribosome stalling. Catalyzes the release of premature peptidyl moieties from peptidyl-tRNA molecules trapped in stalled 50S ribosomal subunits, and thus maintains levels of free tRNAs and 50S ribosomes. This is Peptidyl-tRNA hydrolase from Geobacillus kaustophilus (strain HTA426).